Here is a 323-residue protein sequence, read N- to C-terminus: NADH-ubiquinone oxidoreductase chain 1 (323 aa).

9 consecutive transmembrane segments (helical) span residues 10-30 (LLYI…GLLI), 52-72 (PNVV…KLVL), 84-104 (IIYA…WSVI), 119-139 (VIFI…AGWA), 157-177 (VSYE…AGTV), 189-209 (VWFI…ALAE), 245-265 (YANI…GIVS), 268-288 (ISGA…RATL), and 302-322 (KSLL…VLII).

This sequence belongs to the complex I subunit 1 family.

The protein resides in the mitochondrion inner membrane. The enzyme catalyses a ubiquinone + NADH + 5 H(+)(in) = a ubiquinol + NAD(+) + 4 H(+)(out). Functionally, core subunit of the mitochondrial membrane respiratory chain NADH dehydrogenase (Complex I) that is believed to belong to the minimal assembly required for catalysis. Complex I functions in the transfer of electrons from NADH to the respiratory chain. The immediate electron acceptor for the enzyme is believed to be ubiquinone. The chain is NADH-ubiquinone oxidoreductase chain 1 (nad1) from Dictyostelium citrinum (Slime mold).